The chain runs to 379 residues: Cobalt-precorrin-5B C(1)-methyltransferase (379 aa).

Belongs to the CbiD family.

It catalyses the reaction Co-precorrin-5B + S-adenosyl-L-methionine = Co-precorrin-6A + S-adenosyl-L-homocysteine. It functions in the pathway cofactor biosynthesis; adenosylcobalamin biosynthesis; cob(II)yrinate a,c-diamide from sirohydrochlorin (anaerobic route): step 6/10. Functionally, catalyzes the methylation of C-1 in cobalt-precorrin-5B to form cobalt-precorrin-6A. This chain is Cobalt-precorrin-5B C(1)-methyltransferase, found in Salmonella arizonae (strain ATCC BAA-731 / CDC346-86 / RSK2980).